Here is a 545-residue protein sequence, read N- to C-terminus: ATP synthase subunit alpha (545 aa).

173–180 contacts ATP; it reads GDRQTGKT.

The protein belongs to the ATPase alpha/beta chains family. In terms of assembly, F-type ATPases have 2 components, CF(1) - the catalytic core - and CF(0) - the membrane proton channel. CF(1) has five subunits: alpha(3), beta(3), gamma(1), delta(1), epsilon(1). CF(0) has three main subunits: a(1), b(2) and c(9-12). The alpha and beta chains form an alternating ring which encloses part of the gamma chain. CF(1) is attached to CF(0) by a central stalk formed by the gamma and epsilon chains, while a peripheral stalk is formed by the delta and b chains.

It localises to the cell membrane. It carries out the reaction ATP + H2O + 4 H(+)(in) = ADP + phosphate + 5 H(+)(out). Its function is as follows. Produces ATP from ADP in the presence of a proton gradient across the membrane. The alpha chain is a regulatory subunit. This Leifsonia xyli subsp. xyli (strain CTCB07) protein is ATP synthase subunit alpha.